The sequence spans 172 residues: NADH-ubiquinone oxidoreductase chain 6 (172 aa).

4 helical membrane passes run 1–21, 38–58, 86–106, and 147–167; these read MNNY…GLAL, VGCL…VFLI, WLIL…ICVL, and CATW…FIII.

This sequence belongs to the complex I subunit 6 family. As to quaternary structure, core subunit of respiratory chain NADH dehydrogenase (Complex I) which is composed of 45 different subunits.

The protein localises to the mitochondrion inner membrane. It carries out the reaction a ubiquinone + NADH + 5 H(+)(in) = a ubiquinol + NAD(+) + 4 H(+)(out). Its function is as follows. Core subunit of the mitochondrial membrane respiratory chain NADH dehydrogenase (Complex I) which catalyzes electron transfer from NADH through the respiratory chain, using ubiquinone as an electron acceptor. Essential for the catalytic activity and assembly of complex I. The polypeptide is NADH-ubiquinone oxidoreductase chain 6 (Mtnd6) (Mus musculus (Mouse)).